A 533-amino-acid polypeptide reads, in one-letter code: D-3-phosphoglycerate dehydrogenase (533 aa).

Ala-2 carries the post-translational modification N-acetylalanine. Ser-14 is subject to Phosphoserine. Position 21 is an N6-acetyllysine; alternate (Lys-21). A Glycyl lysine isopeptide (Lys-Gly) (interchain with G-Cter in SUMO1); alternate cross-link involves residue Lys-21. Residue Lys-21 forms a Glycyl lysine isopeptide (Lys-Gly) (interchain with G-Cter in SUMO2); alternate linkage. Position 58 is an N6-acetyllysine (Lys-58). NAD(+)-binding positions include Thr-78, 155 to 156 (RI), Asp-175, Thr-207, 234 to 236 (CAR), and Asp-260. Residue Thr-78 is modified to Phosphothreonine. Arg-236 is an active-site residue. The active site involves Glu-265. The active-site Proton donor is the His-283. 283-286 (HLGA) contacts NAD(+).

This sequence belongs to the D-isomer specific 2-hydroxyacid dehydrogenase family. As to quaternary structure, homotetramer. In terms of tissue distribution, liver, kidney, brain, testis.

The enzyme catalyses (2R)-3-phosphoglycerate + NAD(+) = 3-phosphooxypyruvate + NADH + H(+). Its pathway is amino-acid biosynthesis; L-serine biosynthesis; L-serine from 3-phospho-D-glycerate: step 1/3. Its function is as follows. Catalyzes the reversible oxidation of 3-phospho-D-glycerate to 3-phosphonooxypyruvate, the first step of the phosphorylated L-serine biosynthesis pathway. Does not catalyze the reversible oxidation of 2-hydroxyglutarate to 2-oxoglutarate and the reversible oxidation of (S)-malate to oxaloacetate. The polypeptide is D-3-phosphoglycerate dehydrogenase (Phgdh) (Rattus norvegicus (Rat)).